Reading from the N-terminus, the 128-residue chain is L-ectoine synthase (128 aa).

The protein belongs to the ectoine synthase family.

It catalyses the reaction (2S)-4-acetamido-2-aminobutanoate = L-ectoine + H2O. Its pathway is amine and polyamine biosynthesis; ectoine biosynthesis; L-ectoine from L-aspartate 4-semialdehyde: step 3/3. Its function is as follows. Catalyzes the circularization of gamma-N-acetyl-alpha,gamma-diaminobutyric acid (ADABA) to ectoine (1,4,5,6-tetrahydro-2-methyl-4-pyrimidine carboxylic acid), which is an excellent osmoprotectant. In Aliivibrio fischeri (strain ATCC 700601 / ES114) (Vibrio fischeri), this protein is L-ectoine synthase.